A 131-amino-acid polypeptide reads, in one-letter code: Structural protein ORF131 (131 aa).

It belongs to the viral ORF131/RIP family.

Its subcellular location is the virion. This Acidianus convivator (ATV) protein is Structural protein ORF131.